Consider the following 371-residue polypeptide: Alanine dehydrogenase (371 aa).

Substrate-binding residues include Arg-15 and Lys-74. The Proton donor/acceptor role is filled by His-95. NAD(+) is bound by residues Ser-133, 177–178 (QA), Asp-197, Ser-219, 238–239 (VL), 266–269 (IAID), Arg-279, and 298–301 (VANM). Residue Asp-269 is the Proton donor/acceptor of the active site.

The protein belongs to the AlaDH/PNT family. In terms of assembly, homohexamer. Trimer of dimer.

The catalysed reaction is L-alanine + NAD(+) + H2O = pyruvate + NH4(+) + NADH + H(+). It participates in amino-acid degradation; L-alanine degradation via dehydrogenase pathway; NH(3) and pyruvate from L-alanine: step 1/1. In terms of biological role, catalyzes the reversible reductive amination of pyruvate to L-alanine. May play a role in cell wall synthesis as L-alanine is an important constituent of the peptidoglycan layer. This Staphylococcus saprophyticus subsp. saprophyticus (strain ATCC 15305 / DSM 20229 / NCIMB 8711 / NCTC 7292 / S-41) protein is Alanine dehydrogenase (ald).